The sequence spans 378 residues: Succinyl-diaminopimelate desuccinylase (378 aa).

Residue His-68 participates in Zn(2+) binding. Asp-70 is an active-site residue. Asp-101 is a Zn(2+) binding site. Catalysis depends on Glu-135, which acts as the Proton acceptor. Positions 136, 164, and 350 each coordinate Zn(2+).

This sequence belongs to the peptidase M20A family. DapE subfamily. As to quaternary structure, homodimer. The cofactor is Zn(2+). Co(2+) serves as cofactor.

It carries out the reaction N-succinyl-(2S,6S)-2,6-diaminopimelate + H2O = (2S,6S)-2,6-diaminopimelate + succinate. It functions in the pathway amino-acid biosynthesis; L-lysine biosynthesis via DAP pathway; LL-2,6-diaminopimelate from (S)-tetrahydrodipicolinate (succinylase route): step 3/3. Catalyzes the hydrolysis of N-succinyl-L,L-diaminopimelic acid (SDAP), forming succinate and LL-2,6-diaminopimelate (DAP), an intermediate involved in the bacterial biosynthesis of lysine and meso-diaminopimelic acid, an essential component of bacterial cell walls. This Vibrio parahaemolyticus serotype O3:K6 (strain RIMD 2210633) protein is Succinyl-diaminopimelate desuccinylase.